The following is a 152-amino-acid chain: Nucleoside diphosphate kinase (152 aa).

Lys-11, Phe-59, Arg-87, Thr-93, Arg-104, and Asn-114 together coordinate ATP. His-117 acts as the Pros-phosphohistidine intermediate in catalysis.

The protein belongs to the NDK family. Homotetramer. It depends on Mg(2+) as a cofactor.

Its subcellular location is the cytoplasm. It catalyses the reaction a 2'-deoxyribonucleoside 5'-diphosphate + ATP = a 2'-deoxyribonucleoside 5'-triphosphate + ADP. It carries out the reaction a ribonucleoside 5'-diphosphate + ATP = a ribonucleoside 5'-triphosphate + ADP. Functionally, major role in the synthesis of nucleoside triphosphates other than ATP. The ATP gamma phosphate is transferred to the NDP beta phosphate via a ping-pong mechanism, using a phosphorylated active-site intermediate. The protein is Nucleoside diphosphate kinase of Prochlorococcus marinus (strain MIT 9312).